Reading from the N-terminus, the 432-residue chain is Homeobox protein Hox-D3 (432 aa).

4 disordered regions span residues 43–62 (YSTP…LDTD), 68–197 (CSIQ…SKRV), 253–280 (QKAK…AGHV), and 400–432 (HHGP…LTHL). Gly residues predominate over residues 97 to 106 (NSQGGGGGSQ). The span at 116–131 (PPQPPPPPPTLPPSSP) shows a compositional bias: pro residues. The span at 148 to 158 (NASSSSATISK) shows a compositional bias: polar residues. The Antp-type hexapeptide motif lies at 160 to 165 (IFPWMK). The segment at residues 194–253 (SKRVRTAYTSAQLVELEKEFHFNRYLCRPRRVEMANLLNLTERQIKIWFQNRRMKYKKDQ) is a DNA-binding region (homeobox).

The protein belongs to the Antp homeobox family.

The protein localises to the nucleus. Functionally, sequence-specific transcription factor which is part of a developmental regulatory system that provides cells with specific positional identities on the anterior-posterior axis. This is Homeobox protein Hox-D3 (HOXD3) from Homo sapiens (Human).